A 176-amino-acid chain; its full sequence is Peptidyl-prolyl cis-trans isomerase cyp5 (176 aa).

Residues 10 to 173 (FFDVAVNGKP…AKVEIVDCGE (164 aa)) enclose the PPIase cyclophilin-type domain.

This sequence belongs to the cyclophilin-type PPIase family.

It carries out the reaction [protein]-peptidylproline (omega=180) = [protein]-peptidylproline (omega=0). Functionally, PPIases accelerate the folding of proteins. It catalyzes the cis-trans isomerization of proline imidic peptide bonds in oligopeptides. In Rhizopus delemar (strain RA 99-880 / ATCC MYA-4621 / FGSC 9543 / NRRL 43880) (Mucormycosis agent), this protein is Peptidyl-prolyl cis-trans isomerase cyp5 (cyp5).